Here is an 80-residue protein sequence, read N- to C-terminus: UPF0346 protein LSEI_1394 (80 aa).

It belongs to the UPF0346 family.

The polypeptide is UPF0346 protein LSEI_1394 (Lacticaseibacillus paracasei (strain ATCC 334 / BCRC 17002 / CCUG 31169 / CIP 107868 / KCTC 3260 / NRRL B-441) (Lactobacillus paracasei)).